We begin with the raw amino-acid sequence, 343 residues long: tRNA N6-adenosine threonylcarbamoyltransferase (343 aa).

Histidine 115 and histidine 119 together coordinate Fe cation. Substrate contacts are provided by residues 137–141, aspartate 170, glycine 183, aspartate 187, and asparagine 276; that span reads IVSGG. Residue aspartate 304 coordinates Fe cation.

It belongs to the KAE1 / TsaD family. The cofactor is Fe(2+).

Its subcellular location is the cytoplasm. The catalysed reaction is L-threonylcarbamoyladenylate + adenosine(37) in tRNA = N(6)-L-threonylcarbamoyladenosine(37) in tRNA + AMP + H(+). Required for the formation of a threonylcarbamoyl group on adenosine at position 37 (t(6)A37) in tRNAs that read codons beginning with adenine. Is involved in the transfer of the threonylcarbamoyl moiety of threonylcarbamoyl-AMP (TC-AMP) to the N6 group of A37, together with TsaE and TsaB. TsaD likely plays a direct catalytic role in this reaction. The polypeptide is tRNA N6-adenosine threonylcarbamoyltransferase (Staphylococcus carnosus (strain TM300)).